A 296-amino-acid chain; its full sequence is MQEALSILLGDEAKGLSPAVLGRLKAEWAQEYAHWQRRSYRKALCLLVGRRYLYEPPCGEDPRICLLVIIGVTAEGKKELVMVSDGLRESKASWLEILRDLQARGLETAPLLAIGDGAMGFWAALDEAYPETGQQRCWVHKTANILNELPKAQQSKAKAALQEIWMAANRQAAEKALDVFVRNYQAKYPKAVAKLEKDRAELLAFYDFPAEHWRHIRTTNAIESTFATVRHRTTRTKNCVSRSSFLGLGFKMLQQAEKRWIGIYAPEKVLQLFAGVKFIDGIPANLTLPDDQQTAA.

This sequence belongs to the transposase mutator family.

In terms of biological role, required for the transposition of the insertion element. The chain is Transposase for insertion sequence element IST2 from Acidithiobacillus ferrooxidans (Thiobacillus ferrooxidans).